We begin with the raw amino-acid sequence, 265 residues long: MGSPSACPYRVCIPWQGLLLTASLLTFWNLPNSAQTNIDVVPFNVAEGKEVLLVVHNESQNLYGYNWYKGERVHANYRIIGYVKNISQENAPGPAHNGRETIYPNGTLLIQNVTHNDAGIYTLHVIKENLVNEEVTRQFYVFSEPPKPSITSNNFNPVENKDIVVLTCQPETQNTTYLWWVNNQSLLVSPRLLLSTDNRTLVLLSATKNDIGPYECEIQNPVGASRSDPVTLNVRYESVQASSPDLSAGTAVSIMIGVLAGMALI.

The signal sequence occupies residues 1–35 (MGSPSACPYRVCIPWQGLLLTASLLTFWNLPNSAQ). Positions 36-142 (TNIDVVPFNV…EEVTRQFYVF (107 aa)) constitute an Ig-like V-type domain. N57, N85, N105, N112, N174, N183, and N198 each carry an N-linked (GlcNAc...) asparagine glycan. The Ig-like C2-type domain maps to 146 to 233 (PKPSITSNNF…ASRSDPVTLN (88 aa)). Residues C168 and C216 are joined by a disulfide bond. S242 is lipidated: GPI-anchor amidated serine. A propeptide spans 243-265 (SPDLSAGTAVSIMIGVLAGMALI) (removed in mature form).

Belongs to the immunoglobulin superfamily. CEA family. In terms of assembly, homodimer. In terms of tissue distribution, expressed in columnar epithelial cells of the colon (at protein level). Strongly down-regulated in colonic adenocarcinomas.

It is found in the cell membrane. The protein resides in the apical cell membrane. The sequence is that of Cell adhesion molecule CEACAM7 from Homo sapiens (Human).